The primary structure comprises 234 residues: Endonuclease V (234 aa).

Residues aspartate 36 and aspartate 104 each coordinate Mg(2+).

This sequence belongs to the endonuclease V family. Requires Mg(2+) as cofactor.

The protein localises to the cytoplasm. The enzyme catalyses Endonucleolytic cleavage at apurinic or apyrimidinic sites to products with a 5'-phosphate.. Its function is as follows. DNA repair enzyme involved in the repair of deaminated bases. Selectively cleaves double-stranded DNA at the second phosphodiester bond 3' to a deoxyinosine leaving behind the intact lesion on the nicked DNA. The protein is Endonuclease V of Yersinia pseudotuberculosis serotype O:1b (strain IP 31758).